The following is a 214-amino-acid chain: Cell division protein SepF (214 aa).

The disordered stretch occupies residues 23-70; it reads YYDDRAPSRGFPRPRFDDGYGRYDGDDYDDPRREPADCPPPAGYRGGY. Positions 36-58 are enriched in basic and acidic residues; sequence PRFDDGYGRYDGDDYDDPRREPA.

It belongs to the SepF family. In terms of assembly, homodimer. Interacts with FtsZ.

It localises to the cytoplasm. Cell division protein that is part of the divisome complex and is recruited early to the Z-ring. Probably stimulates Z-ring formation, perhaps through the cross-linking of FtsZ protofilaments. Its function overlaps with FtsA. The polypeptide is Cell division protein SepF (Mycolicibacterium paratuberculosis (strain ATCC BAA-968 / K-10) (Mycobacterium paratuberculosis)).